A 56-amino-acid chain; its full sequence is MLNFLLQNTFVLWSNFILCKLPEAYAVFDPIVDVMPVIPVFFFLLAFVWQAAVSFR.

A propeptide spanning residues M1 to C19 is cleaved from the precursor. Residues M35–F55 traverse the membrane as a helical segment.

The protein belongs to the PsbK family. In terms of assembly, PSII is composed of 1 copy each of membrane proteins PsbA, PsbB, PsbC, PsbD, PsbE, PsbF, PsbH, PsbI, PsbJ, PsbK, PsbL, PsbM, PsbT, PsbX, PsbY, PsbZ, Psb30/Ycf12, at least 3 peripheral proteins of the oxygen-evolving complex and a large number of cofactors. It forms dimeric complexes.

Its subcellular location is the plastid. It is found in the chloroplast thylakoid membrane. In terms of biological role, one of the components of the core complex of photosystem II (PSII). PSII is a light-driven water:plastoquinone oxidoreductase that uses light energy to abstract electrons from H(2)O, generating O(2) and a proton gradient subsequently used for ATP formation. It consists of a core antenna complex that captures photons, and an electron transfer chain that converts photonic excitation into a charge separation. This chain is Photosystem II reaction center protein K, found in Welwitschia mirabilis (Tree tumbo).